A 346-amino-acid polypeptide reads, in one-letter code: Lysyl aminopeptidase (346 aa).

H63 and D177 together coordinate Zn(2+). E207 functions as the Proton acceptor in the catalytic mechanism. 3 residues coordinate Zn(2+): E208, D230, and H314.

As to quaternary structure, homotetramer. It depends on Zn(2+) as a cofactor.

The catalysed reaction is Preferentially, release of N-terminal lysine.. Functionally, hydrolyzes di-, tri- and tetrapeptides with a lysine as the N-terminal amino acid and with Gly, Lys, Ala, Phe or Glu in the second position. This chain is Lysyl aminopeptidase, found in Pyrococcus furiosus (strain ATCC 43587 / DSM 3638 / JCM 8422 / Vc1).